The sequence spans 193 residues: Ion-translocating oxidoreductase complex subunit A (193 aa).

Helical transmembrane passes span 5-25 (LLLL…FLGL), 39-59 (IGMS…SYLV), 72-92 (LTTM…EMVV), 102-122 (LLGI…VALL), 134-154 (IIYG…FSAM), and 171-191 (AIAM…TGLV).

The protein belongs to the NqrDE/RnfAE family. As to quaternary structure, the complex is composed of six subunits: RnfA, RnfB, RnfC, RnfD, RnfE and RnfG.

Its subcellular location is the cell inner membrane. Its function is as follows. Part of a membrane-bound complex that couples electron transfer with translocation of ions across the membrane. This chain is Ion-translocating oxidoreductase complex subunit A, found in Colwellia psychrerythraea (strain 34H / ATCC BAA-681) (Vibrio psychroerythus).